A 169-amino-acid chain; its full sequence is Transcription antitermination protein NusB (169 aa).

Belongs to the NusB family.

Its function is as follows. Involved in transcription antitermination. Required for transcription of ribosomal RNA (rRNA) genes. Binds specifically to the boxA antiterminator sequence of the ribosomal RNA (rrn) operons. In Deinococcus geothermalis (strain DSM 11300 / CIP 105573 / AG-3a), this protein is Transcription antitermination protein NusB.